Here is a 311-residue protein sequence, read N- to C-terminus: Cell division protein ZipA (311 aa).

Residues 1 to 6 (MENLQL) are Periplasmic-facing. A helical transmembrane segment spans residues 7–27 (VLFVLGAIAIIAVLVHGFWSI). At 28-311 (RKQQPKSLKE…YLQRIRAQLD (284 aa)) the chain is on the cytoplasmic side. The interval 46-114 (DQASVRDSQG…FALSDEPVQR (69 aa)) is disordered. Basic and acidic residues-rich tracts occupy residues 62 to 83 (GEVRVRKEVPATDRQEKEDKPV) and 94 to 103 (RDVEDSRHEQ).

This sequence belongs to the ZipA family. As to quaternary structure, interacts with FtsZ via their C-terminal domains.

It is found in the cell inner membrane. Its function is as follows. Essential cell division protein that stabilizes the FtsZ protofilaments by cross-linking them and that serves as a cytoplasmic membrane anchor for the Z ring. Also required for the recruitment to the septal ring of downstream cell division proteins. The chain is Cell division protein ZipA from Shewanella woodyi (strain ATCC 51908 / MS32).